Reading from the N-terminus, the 239-residue chain is Small ribosomal subunit protein uS2 (239 aa).

This sequence belongs to the universal ribosomal protein uS2 family.

The protein is Small ribosomal subunit protein uS2 of Francisella philomiragia subsp. philomiragia (strain ATCC 25017 / CCUG 19701 / FSC 153 / O#319-036).